We begin with the raw amino-acid sequence, 329 residues long: Protein PRY2 (329 aa).

The signal sequence occupies residues 1-18; the sequence is MKFSKVSLLAASASVALS. Positions 122–131 are enriched in polar residues; the sequence is TSASATQDDV. Positions 122–197 are disordered; it reads TSASATQDDV…SSSDFSTSMV (76 aa). Residues 132-190 show a composition bias toward low complexity; that stretch reads TTTLTSSTQPTSTTTPTTTTTSPTTTTSPTTTASPTTTASPTTATTTQSTASSTQSSSS. The SCP domain maps to 197–311; sequence VNEHNTKRAL…EWGDYIICSY (115 aa).

It belongs to the CRISP family. O-glycosylated.

It localises to the secreted. Secreted protein required for efficient export of lipids such as acetylated sterols. Acts in detoxification of hydrophobic compounds. In Saccharomyces cerevisiae (strain ATCC 204508 / S288c) (Baker's yeast), this protein is Protein PRY2 (PRY2).